Consider the following 103-residue polypeptide: Small ribosomal subunit protein uS10 (103 aa).

The protein belongs to the universal ribosomal protein uS10 family. As to quaternary structure, part of the 30S ribosomal subunit.

Its function is as follows. Involved in the binding of tRNA to the ribosomes. This chain is Small ribosomal subunit protein uS10, found in Borrelia recurrentis (strain A1).